Here is an 865-residue protein sequence, read N- to C-terminus: Fanconi-associated nuclease 1 homolog (865 aa).

Residues 35–62 form a UBZ4-type zinc finger; sequence GKICPLCETKFSLASYKSHMNTCNVADD. Residues cysteine 38, cysteine 41, histidine 53, and cysteine 57 each coordinate Zn(2+). 2 disordered regions span residues 90–140 and 162–187; these read DASF…SLDV and RRSS…PVKK. Composition is skewed to basic and acidic residues over residues 93 to 112 and 174 to 187; these read FSDK…REVP and DQAD…PVKK. Mn(2+)-binding residues include glutamate 682, aspartate 810, glutamate 825, and valine 826. A VRR-NUC domain is found at 744–857; sequence QELIEENIRK…GIRAEVCHVA (114 aa).

Belongs to the FAN1 family. Mn(2+) is required as a cofactor. The cofactor is Mg(2+).

The protein localises to the nucleus. The enzyme catalyses Hydrolytically removes 5'-nucleotides successively from the 3'-hydroxy termini of 3'-hydroxy-terminated oligonucleotides.. Its function is as follows. Nuclease required for the repair of DNA interstrand cross-links (ICL). Acts as a 5'-3' exonuclease that anchors at a cut end of DNA and cleaves DNA successively at every third nucleotide, allowing to excise an ICL from one strand through flanking incisions. In Caenorhabditis elegans, this protein is Fanconi-associated nuclease 1 homolog (fan-1).